Consider the following 228-residue polypeptide: Ras-related protein Rab-33B (228 aa).

8 residues coordinate GTP: N41, V42, G43, K44, T45, C46, T60, and T63. T45 provides a ligand contact to Mg(2+). The Switch 1 signature appears at G54 to V66. T63 and D86 together coordinate Mg(2+). The Switch 2 signature appears at T87–H106. 6 residues coordinate GTP: G89, N146, K147, D149, A177, and K178. S-geranylgeranyl cysteine attachment occurs at residues C226 and C228. A Cysteine methyl ester modification is found at C228.

The protein belongs to the small GTPase superfamily. Rab family. Interacts (GTP- and GDP-bound forms) with ATG16L1; the complex consists of a tetramer where two RAB33B molecules bind independently one molecule of the ATG16L1 homodimer; the interaction promotes ATG12-ATG5-ATG16L1 complex recruitment to phagophores. Interacts with ATG16L2; however interaction is approximately hundred times lower than for ATG16L1. Interacts with RIC1 (via C-terminus domain); the interaction is direct with a preference for RAB33B-GTP. Interacts with RGP1. Mg(2+) serves as cofactor.

The protein localises to the golgi apparatus membrane. The protein resides in the golgi apparatus. It localises to the cis-Golgi network. Its subcellular location is the preautophagosomal structure membrane. The catalysed reaction is GTP + H2O = GDP + phosphate + H(+). With respect to regulation, regulated by guanine nucleotide exchange factors (GEFs) which promote the exchange of bound GDP for free GTP. Regulated by GTPase activating proteins (GAPs) such as SGSM2 which increase the GTP hydrolysis activity. Inhibited by GDP dissociation inhibitors (GDIs). Functionally, the small GTPases Rab are key regulators of intracellular membrane trafficking, from the formation of transport vesicles to their fusion with membranes. Rabs cycle between an inactive GDP-bound form and an active GTP-bound form that is able to recruit to membranes different sets of downstream effectors directly responsible for vesicle formation, movement, tethering and fusion. RAB33B acts, in coordination with RAB6A, to regulate intra-Golgi retrograde trafficking. Participates in autophagosome formation by recruiting the ATG12-ATG5-ATG16L1 complex to phagophores, probably in a nucleotide-independent manner. This is Ras-related protein Rab-33B (RAB33B) from Gallus gallus (Chicken).